A 349-amino-acid chain; its full sequence is Cytokine response-modifying protein B (349 aa).

The signal sequence occupies residues 1–22 (MKSVLYLYILFLSCIIINGRDA). A TNF-binding region spans residues 1 to 160 (MKSVLYLYIL…SPCGFGTYSH (160 aa)). TNFR-Cys repeat units follow at residues 31–66 (KCKDTEYKRHNLCCLSCPPGTYASRLCDSKTNTQCT) and 67–108 (PCGS…NRIC). Cystine bridges form between cysteine 32/cysteine 43, cysteine 44/cysteine 57, cysteine 47/cysteine 65, cysteine 68/cysteine 83, cysteine 86/cysteine 100, and cysteine 90/cysteine 108. N-linked (GlcNAc...) asparagine; by host glycosylation is found at asparagine 101, asparagine 173, asparagine 189, asparagine 215, and asparagine 248. Residues 161–349 (TVSSADKCEP…ITNSKPTRFL (189 aa)) form a chemokine-binding region.

This sequence belongs to the orthopoxvirus OPG002 family. Homodimer. Interacts with host TNF, LTA, CCL28, CCL25, CXCL12, CXCL13 and CXCl14.

The protein resides in the secreted. Functionally, inhibits host immune defense by binding to host TNF and various chemokines in the extracellular space. Binds host CC chemokines (beta chemokines) and CXC chemokines (alpha chemokines). In Variola virus (isolate Human/India/Ind3/1967) (VARV), this protein is Cytokine response-modifying protein B (OPG002).